A 782-amino-acid chain; its full sequence is MSLPANTPFSLEEITAEGLKPEEYAEIVQRLGRHPNLAELGMFGVMWSEHCCYKNSRPLLKQFPTQGQRVLVGPGENAGVVDLGEGLRLAFKIESHNHPSAVEPFQGAATGVGGILRDIFTMGARPIALLNSLRFGSLDDPRTRRLFSGVVSGISHYGNCVGVPTVGGEVYFDPAYTGNPLVNVMALGLMETPEIVKSGASGIGNPVLYVGSTTGRDGMGGASFASAELSEASLDDRPAVQVGDPFLEKSLIEACLEAFKTGAVVAAQDMGAAGITCSTSEMAAKGGVGIDLDLDLIPVREKGMVPYEYLLSESQERMLFVAYKGREQELIDIFHRWGLHAVVAGRVIEEPIVRIRFQGGIAAEIPAAALAENTPLYHRQSLTEPPDFLKTAWAWTPAALPPCSTTGLQLESGEKTWNQVLLDLLASPTIASKRWVYRQYDHQVQNNTVLLPGAADAAVVRLRPQLADQACQGVNSGVAATLDCNARYVYLHPYAGAKAAVAEAARNLSCVGAEPLAVTDNLNFASPENPVGYWQLAEACRGLAEACRELNTPVTGGNVSLYNETLDPEGKPQPIYPTPVVGMVGLIPDLNRICGQGWQSTGDLIYLLGVPLSDAGHATVTLGGSEYLATIHQTIAGQPPQVDLALEKQVQAVCRHGIRQGWIHSAHDCAEGGIAIALAEACISGQRGAEIELDCSDISRLDQLLFAEGGARILVSVPLDQQTLWESYLEEQLQGHWQRLGQVTEINSCLWVRSSDNLSLIQVTIEEISTAWGKAIENKLSA.

His50 is a catalytic residue. ATP contacts are provided by Tyr53 and Lys92. Glu94 contacts Mg(2+). Residues Ser95–His98 and Arg117 contribute to the substrate site. Residue His96 is the Proton acceptor of the active site. A Mg(2+)-binding site is contributed by Asp118. A substrate-binding site is contributed by Gln241. Mg(2+) is bound at residue Asp269. Glu313 to Gln315 contacts substrate. ATP contacts are provided by Asp520 and Gly557. A Mg(2+)-binding site is contributed by Asn558. Ser560 provides a ligand contact to substrate.

It belongs to the FGAMS family. In terms of assembly, monomer. Part of the FGAM synthase complex composed of 1 PurL, 1 PurQ and 2 PurS subunits.

The protein localises to the cytoplasm. It carries out the reaction N(2)-formyl-N(1)-(5-phospho-beta-D-ribosyl)glycinamide + L-glutamine + ATP + H2O = 2-formamido-N(1)-(5-O-phospho-beta-D-ribosyl)acetamidine + L-glutamate + ADP + phosphate + H(+). It participates in purine metabolism; IMP biosynthesis via de novo pathway; 5-amino-1-(5-phospho-D-ribosyl)imidazole from N(2)-formyl-N(1)-(5-phospho-D-ribosyl)glycinamide: step 1/2. In terms of biological role, part of the phosphoribosylformylglycinamidine synthase complex involved in the purines biosynthetic pathway. Catalyzes the ATP-dependent conversion of formylglycinamide ribonucleotide (FGAR) and glutamine to yield formylglycinamidine ribonucleotide (FGAM) and glutamate. The FGAM synthase complex is composed of three subunits. PurQ produces an ammonia molecule by converting glutamine to glutamate. PurL transfers the ammonia molecule to FGAR to form FGAM in an ATP-dependent manner. PurS interacts with PurQ and PurL and is thought to assist in the transfer of the ammonia molecule from PurQ to PurL. The protein is Phosphoribosylformylglycinamidine synthase subunit PurL of Cyanothece sp. (strain PCC 7425 / ATCC 29141).